Here is a 197-residue protein sequence, read N- to C-terminus: Phosphoheptose isomerase (197 aa).

In terms of domain architecture, SIS spans 36–197 (MVNALLNEGK…IDRQLFGSEE (162 aa)). A substrate-binding site is contributed by 51 to 53 (NGG). Residues His-60 and Glu-64 each contribute to the Zn(2+) site. Substrate-binding positions include Glu-64, 93–94 (ND), 119–121 (STS), Ser-124, and Gln-174. Gln-174 and His-182 together coordinate Zn(2+).

This sequence belongs to the SIS family. GmhA subfamily. In terms of assembly, homotetramer. The cofactor is Zn(2+).

The protein resides in the cytoplasm. The catalysed reaction is 2 D-sedoheptulose 7-phosphate = D-glycero-alpha-D-manno-heptose 7-phosphate + D-glycero-beta-D-manno-heptose 7-phosphate. Its pathway is carbohydrate biosynthesis; D-glycero-D-manno-heptose 7-phosphate biosynthesis; D-glycero-alpha-D-manno-heptose 7-phosphate and D-glycero-beta-D-manno-heptose 7-phosphate from sedoheptulose 7-phosphate: step 1/1. Catalyzes the isomerization of sedoheptulose 7-phosphate in D-glycero-D-manno-heptose 7-phosphate. This is Phosphoheptose isomerase from Pseudomonas aeruginosa (strain LESB58).